The following is a 390-amino-acid chain: Levoglucosan dehydrogenase (390 aa).

NADH contacts are provided by Phe13, Met14, Glu43, Thr81, Asn83, His86, Glu103, Lys104, Ala130, and Asn132. Lys104 lines the levoglucosan pocket. Residues Tyr133 and Gln163 each contribute to the levoglucosan site. The NADH site is built by Trp175 and Arg176. Levoglucosan contacts are provided by Arg176, Asp189, and His193. NADH is bound at residue Tyr335.

Belongs to the Gfo/Idh/MocA family. As to quaternary structure, homotetramer.

The enzyme catalyses levoglucosan + NAD(+) = 3-dehydrolevoglucosan + NADH + H(+). Functionally, catalyzes the oxidation of levoglucosan (1,6-anhydro-beta-D-glucose, LG) to 3-dehydrolevoglucosan (3-keto-LG). Exhibits high substrate specificity toward levoglucosan and NAD(+) for the oxidative reaction. Exhibits weak activities (about 4% compared with that of LG) toward L-sorbose and 1,5-anhydro-D-glucitol, and activity toward D-xylose is also detectable (1.7%). Can also efficiently catalyzes the NADH-dependent reduction (reverse reaction) of 3-keto-LG. The protein is Levoglucosan dehydrogenase of Pseudarthrobacter phenanthrenivorans (strain DSM 18606 / JCM 16027 / LMG 23796 / Sphe3) (Arthrobacter phenanthrenivorans).